Consider the following 351-residue polypeptide: Nicotinate-nucleotide--dimethylbenzimidazole phosphoribosyltransferase (351 aa).

The Proton acceptor role is filled by E317.

Belongs to the CobT family.

The catalysed reaction is 5,6-dimethylbenzimidazole + nicotinate beta-D-ribonucleotide = alpha-ribazole 5'-phosphate + nicotinate + H(+). The protein operates within nucleoside biosynthesis; alpha-ribazole biosynthesis; alpha-ribazole from 5,6-dimethylbenzimidazole: step 1/2. Its function is as follows. Catalyzes the synthesis of alpha-ribazole-5'-phosphate from nicotinate mononucleotide (NAMN) and 5,6-dimethylbenzimidazole (DMB). This Ectopseudomonas mendocina (strain ymp) (Pseudomonas mendocina) protein is Nicotinate-nucleotide--dimethylbenzimidazole phosphoribosyltransferase.